Consider the following 418-residue polypeptide: MESYIQNLFAERIGGKKFGKEDVIYKFEKIKRAKQEAMKRHPDMELIDMGVGEPDEMADPEVIRVLCEEAKKWENRGYADNGIQELKDAVPPYMEKVYGVKDIDPVNEVIHSIGSKPALAYITSAFINPGDVCLMTVPGYPVTATHTKWYGGEVYNLPLLEENDFLPDLESIPEDIKKRAKILYLNYPNNPTGAQATKKFYKEVVDFAFENEVIVVQDAAYGALVYDGKPLSFLSVKDAKEVGVEIHSFSKAFNMTGWRLAFLVGNELIIKAFATVKDNFDSGQFIPIQKAGIYCLQHPEITERVRQKYERRLRKMVKILNEVGFKARMPGGTFYLYVKSPTKANGIEFKTAEDFSQYLIKEKLISTVPWDDAGHYLRLAACFVAKDENGNPTTEEKYEDMVLEEFKRRLEGMDLEFE.

Tyr25 and Gly52 together coordinate substrate. Pyridoxal 5'-phosphate-binding positions include Tyr78, 115–116, Tyr140, Asn190, Tyr221, and 248–250; these read SK and SFS. 3 residues coordinate substrate: Lys116, Tyr140, and Asn190. The residue at position 251 (Lys251) is an N6-(pyridoxal phosphate)lysine. Arg259 is a binding site for pyridoxal 5'-phosphate.

Belongs to the class-I pyridoxal-phosphate-dependent aminotransferase family. Homodimer. Pyridoxal 5'-phosphate is required as a cofactor.

It localises to the cytoplasm. The enzyme catalyses (2S,6S)-2,6-diaminopimelate + 2-oxoglutarate = (S)-2,3,4,5-tetrahydrodipicolinate + L-glutamate + H2O + H(+). The protein operates within amino-acid biosynthesis; L-lysine biosynthesis via DAP pathway; LL-2,6-diaminopimelate from (S)-tetrahydrodipicolinate (aminotransferase route): step 1/1. In terms of biological role, involved in the synthesis of meso-diaminopimelate (m-DAP or DL-DAP), required for both lysine and peptidoglycan biosynthesis. Catalyzes the direct conversion of tetrahydrodipicolinate to LL-diaminopimelate, a reaction that requires three enzymes in E.coli. The sequence is that of LL-diaminopimelate aminotransferase (dapL) from Methanocaldococcus jannaschii (strain ATCC 43067 / DSM 2661 / JAL-1 / JCM 10045 / NBRC 100440) (Methanococcus jannaschii).